Reading from the N-terminus, the 1113-residue chain is Translation initiation factor IF-2 (1113 aa).

Polar residues-rich tracts occupy residues 56–72, 129–139, 162–187, and 194–205; these read QSNQ…SSKE, KANTSNQSKGV, LENN…TQLV, and TKNNEPPQQKTS. 2 disordered regions span residues 56 to 446 and 470 to 504; these read QSNQ…IGEN and LARP…RQRR. Over residues 248-265 the composition is skewed to low complexity; sequence PVQPRTQNNQNRQRIPNK. A compositionally biased stretch (basic and acidic residues) spans 415 to 429; the sequence is RRSDWDDAAKLEALR. Basic residues-rich tracts occupy residues 474 to 483 and 490 to 504; these read AKPKSTKKSN and TRKR…RQRR. The tr-type G domain occupies 605 to 777; it reads RRPPVVTVMG…VLLVTEVEDL (173 aa). A G1 region spans residues 614-621; sequence GHVDHGKT. Residue 614 to 621 coordinates GTP; sequence GHVDHGKT. Residues 639–643 form a G2 region; that stretch reads GITQH. Positions 664-667 are G3; that stretch reads DTPG. GTP contacts are provided by residues 664–668 and 718–721; these read DTPGH and NKID. Residues 718-721 are G4; the sequence is NKID. The tract at residues 754–756 is G5; the sequence is SAI.

It belongs to the TRAFAC class translation factor GTPase superfamily. Classic translation factor GTPase family. IF-2 subfamily.

The protein resides in the cytoplasm. One of the essential components for the initiation of protein synthesis. Protects formylmethionyl-tRNA from spontaneous hydrolysis and promotes its binding to the 30S ribosomal subunits. Also involved in the hydrolysis of GTP during the formation of the 70S ribosomal complex. In Prochlorococcus marinus (strain MIT 9211), this protein is Translation initiation factor IF-2.